The following is a 281-amino-acid chain: Gas vesicle protein L1 (281 aa).

Belongs to the gas vesicle GvpF/GvpL family. May form oligomers. GvpF to GvpM interact with each other in vitro, and may form multi-subunit complex(es). Interacts with GvpC1, GvpN1 and GvpO1.

The protein localises to the gas vesicle. It is found in the cytoplasm. Functionally, proteins GvpF to GvpM might be involved in nucleating gas vesicle formation. A minor component of the gas vesicle. This the only minor gas vesicle protein that binds all the others (including GvpC1, GvpN1 and GvpO1, but not GvpA1), suggesting it might be able to assemble them. Gas vesicles are hollow, gas filled proteinaceous nanostructures found in several microbial planktonic microorganisms. They allow positioning of halobacteria at the optimal depth for growth in the poorly aerated, shallow brine pools of their habitat. Expression of a 9.5 kb p-vac DNA fragment containing 2 divergently transcribed regions (gvpD-gvpE-gvpF-gvpG-gvpH-gvpI-gvpJ-gvpK-gvpL-gvpM and gvpA-gvpC-gvpN-gvpO) allows H.volcanii to produce gas vesicles. A minimal gas vesicle can be made in H.volcanii by gvpA1-gvpO1 plus gvpF1-gvpG1-gvpJ1-gvpK1-gvpL1-gvpM1; lack of enough GvpJ1 prevents their formation. A similar region restores gas vesicle production in H.halobium without the p-vac locus, but it still has the c-vac locus. The chain is Gas vesicle protein L1 (gvpL11) from Halobacterium salinarum (strain ATCC 700922 / JCM 11081 / NRC-1) (Halobacterium halobium).